The following is a 1390-amino-acid chain: MKAPAVLAPGILVLLFTLVQRSNGECKEALAKSEMNVNMKYQLPNFTAETPIQNVILHEHHIFLGATNYIYVLNEEDLQKVAEYKTGPVLEHPDCFPCQDCSSKANLSGGVWKDNINMALVVDTYYDDQLISCGSVNRGTCQRHVFPHNHTADIQSEVHCIFSPQIEEPSQCPDCVVSALGAKVLSSVKDRFINFFVGNTINSSYFPDHPLHSISVRRLKETKDGFMFLTDQSYIDVLPEFRDSYPIKYVHAFESNNFIYFLTVQRETLDAQTFHTRIIRFCSINSGLHSYMEMPLECILTEKRKKRSTKKEVFNILQAAYVSKPGAQLARQIGASLNDDILFGVFAQSKPDSAEPMDRSAMCAFPIKYVNDFFNKIVNKNNVRCLQHFYGPNHEHCFNRTLLRNSSSCEARRDEYRTEFTTALQRVDLFMGQFSEVLLTSISTFIKGDLTIANLGTSEGRFMQVVVSRSGPSTPHVNFLLDSHPVSPEVIVEHTLNQNGYTLVVTGKKITKIPLNGLGCRHFQSCSQCLSAPPFVQCGWCHDKCVRSEECLSGTWTQQICLPAIYKVFPNSAPLEGGTRLTICGWDFGFRRNNKFDLKKTRVLLGNESCTLTLSESTMNTLKCTVGPAMNKHFNMSIIISNGHGTTQYSTFSYVDPVITSISPKYGPMAGGTLLTLTGNYLNSGNSRHISIGGKTCTLKSVSNSILECYTPAQTISTEFAVKLKIDLANRETSIFSYREDPIVYEIHPTKSFISGGSTITGVGKNLNSVSVPRMVINVHEAGRNFTVACQHRSNSEIICCTTPSLQQLNLQLPLKTKAFFMLDGILSKYFDLIYVHNPVFKPFEKPVMISMGNENVLEIKGNDIDPEAVKGEVLKVGNKSCENIHLHSEAVLCTVPNDLLKLNSELNIEWKQAISSTVLGKVIVQPDQNFTGLIAGVVSISIALLLLLGFFLWLKKRKQIKDLGSELVRYDARVHTPHLDRLVSARSVSPTTEMVSNESVDYRATFPEDQFPNSSQNGSCRQVQYPLTDMSPILTSGDSDISSPLLQNTVHIDLSALNPELVQAVQHVVIGPSSLIVHFNEVIGRGHFGCVYHGTLLDNDGKKIHCAVKSLNRITDIGEVSQFLTEGIIMKDFSHPNVLSLLGICLRSEGSPLVVLPYMKHGDLRNFIRNETHNPTVKDLIGFGLQVAKGMKYLASKKFVHRDLAARNCMLDEKFTVKVADFGLARDMYDKEYYSVHNKTGAKLPVKWMALESLQTQKFTTKSDVWSFGVLLWELMTRGAPPYPDVNTFDITVYLLQGRRLLQPEYCPDPLYEVMLKCWHPKAEMRPSFSELVSRISAIFSTFIGEHYVHVNATYVNVKCVAPYPSLLSSEDNADDEVDTRPASFWETS.

A signal peptide spans 1–24 (MKAPAVLAPGILVLLFTLVQRSNG). At 25–932 (ECKEALAKSE…VIVQPDQNFT (908 aa)) the chain is on the extracellular side. One can recognise a Sema domain in the interval 27–515 (KEALAKSEMN…TGKKITKIPL (489 aa)). Asparagine 45 is a glycosylation site (N-linked (GlcNAc...) asparagine). 4 cysteine pairs are disulfide-bonded: cysteine 95/cysteine 101, cysteine 98/cysteine 160, cysteine 133/cysteine 141, and cysteine 172/cysteine 175. N-linked (GlcNAc...) asparagine glycosylation is present at asparagine 106. N-linked (GlcNAc...) asparagine glycosylation occurs at asparagine 149. Asparagine 202 carries an N-linked (GlcNAc...) asparagine glycan. 2 disulfide bridges follow: cysteine 298–cysteine 363 and cysteine 385–cysteine 397. Residues asparagine 399 and asparagine 405 are each glycosylated (N-linked (GlcNAc...) asparagine). 4 disulfides stabilise this stretch: cysteine 520/cysteine 538, cysteine 526/cysteine 561, cysteine 529/cysteine 545, and cysteine 541/cysteine 551. IPT/TIG domains lie at 563–655 (PAIY…FSYV), 657–739 (PVIT…FSYR), and 742–836 (PIVY…LIYV). Residue threonine 582 is glycosylated (O-linked (Man) threonine). N-linked (GlcNAc...) asparagine glycans are attached at residues asparagine 607 and asparagine 635. Threonine 676 and threonine 761 each carry an O-linked (Man) threonine glycan. N-linked (GlcNAc...) asparagine glycans are attached at residues asparagine 785, asparagine 879, and asparagine 930. A helical transmembrane segment spans residues 933–955 (GLIAGVVSISIALLLLLGFFLWL). The Cytoplasmic portion of the chain corresponds to 956-1390 (KKRKQIKDLG…TRPASFWETS (435 aa)). A Phosphoserine modification is found at serine 966. Threonine 977 carries the phosphothreonine modification. A phosphoserine mark is found at serine 990, serine 997, and serine 1000. At tyrosine 1003 the chain carries Phosphotyrosine. The Protein kinase domain maps to 1078 to 1345 (VHFNEVIGRG…RISAIFSTFI (268 aa)). ATP contacts are provided by residues 1084 to 1092 (IGRGHFGCV) and lysine 1110. Aspartate 1204 functions as the Proton acceptor in the catalytic mechanism. The tract at residues 1212–1390 (LDEKFTVKVA…TRPASFWETS (179 aa)) is interaction with RANBP9. Tyrosine 1230 bears the Phosphotyrosine mark. Phosphotyrosine; by autocatalysis is present on residues tyrosine 1234 and tyrosine 1235. Position 1289 is a phosphothreonine (threonine 1289). Positions 1320–1359 (WHPKAEMRPSFSELVSRISAIFSTFIGEHYVHVNATYVNV) are interaction with MUC20. Phosphotyrosine; by autocatalysis is present on residues tyrosine 1349 and tyrosine 1356. Tyrosine 1365 carries the post-translational modification Phosphotyrosine.

Belongs to the protein kinase superfamily. Tyr protein kinase family. Heterodimer made of an alpha chain (50 kDa) and a beta chain (145 kDa) which are disulfide linked. Binds PLXNB1. Interacts when phosphorylated with downstream effectors including STAT3, PIK3R1, SRC, PCLG1, GRB2 and GAB1. Interacts with SPSB1, SPSB2 and SPSB4. Interacts with INPP5D/SHIP1. When phosphorylated at Tyr-1356, interacts with INPPL1/SHIP2. Interacts with RANBP9 and RANBP10, as well as SPSB1, SPSB2, SPSB3 and SPSB4. SPSB1 binding occurs in the presence and in the absence of HGF, however HGF treatment has a positive effect on this interaction. Interacts with MUC20; prevents interaction with GRB2 and suppresses hepatocyte growth factor-induced cell proliferation. Interacts with GRB10. Interacts with PTPN1 and PTPN2. Interacts with HSP90AA1 and HSP90AB1; the interaction suppresses MET kinase activity. Interacts with tensin TNS3. Interacts (when phosphorylated) with tensin TNS4 (via SH2 domain); the interaction increases MET protein stability by inhibiting MET endocytosis and subsequent lysosomal degradation. Autophosphorylated in response to ligand binding on Tyr-1234 and Tyr-1235 in the kinase domain leading to further phosphorylation of Tyr-1349 and Tyr-1356 in the C-terminal multifunctional docking site. Dephosphorylated by PTPRJ at Tyr-1349 and Tyr-1365. Dephosphorylated by PTPN1 and PTPN2. In terms of processing, ubiquitinated. Ubiquitination by CBL regulates the receptor stability and activity through proteasomal degradation. Post-translationally, O-mannosylation of IPT/TIG domains by TMEM260 is required for protein maturation. O-mannosylated residues are composed of single mannose glycans that are not elongated or modified.

It is found in the membrane. The enzyme catalyses L-tyrosyl-[protein] + ATP = O-phospho-L-tyrosyl-[protein] + ADP + H(+). With respect to regulation, in its inactive state, the C-terminal tail interacts with the catalytic domain and inhibits the kinase activity. Upon ligand binding, the C-terminal tail is displaced and becomes phosphorylated, thus increasing the kinase activity. Receptor tyrosine kinase that transduces signals from the extracellular matrix into the cytoplasm by binding to hepatocyte growth factor/HGF ligand. Regulates many physiological processes including proliferation, scattering, morphogenesis and survival. Ligand binding at the cell surface induces autophosphorylation of MET on its intracellular domain that provides docking sites for downstream signaling molecules. Following activation by ligand, interacts with the PI3-kinase subunit PIK3R1, PLCG1, SRC, GRB2, STAT3 or the adapter GAB1. Recruitment of these downstream effectors by MET leads to the activation of several signaling cascades including the RAS-ERK, PI3 kinase-AKT, or PLCgamma-PKC. The RAS-ERK activation is associated with the morphogenetic effects while PI3K/AKT coordinates prosurvival effects. During embryonic development, MET signaling plays a role in gastrulation, development and migration of muscles and neuronal precursors, angiogenesis and kidney formation. In adults, participates in wound healing as well as organ regeneration and tissue remodeling. Also promotes differentiation and proliferation of hematopoietic cells. This chain is Hepatocyte growth factor receptor (MET), found in Pan troglodytes (Chimpanzee).